The chain runs to 454 residues: CBL-interacting protein kinase 17 (454 aa).

In terms of domain architecture, Protein kinase spans 13–268 (YEMGRTLGEG…MAGIKSHEWF (256 aa)). ATP-binding positions include 19–27 (LGEGNFGKV) and lysine 42. The Proton acceptor role is filled by aspartate 136. The activation loop stretch occupies residues 154–183 (DFGLSALPQHLGNDGLLHTTCGSPNYIAPE). The NAF domain occupies 304–328 (KNSHQINAFQLIGMASSLDLSGFFE). The interval 334 to 363 (QRRIRFTSTHPPKDAFDKIESSATELGFQV) is PPI.

It belongs to the protein kinase superfamily. CAMK Ser/Thr protein kinase family. SNF1 subfamily. The cofactor is Mn(2+).

It carries out the reaction L-seryl-[protein] + ATP = O-phospho-L-seryl-[protein] + ADP + H(+). The catalysed reaction is L-threonyl-[protein] + ATP = O-phospho-L-threonyl-[protein] + ADP + H(+). Its function is as follows. CIPK serine-threonine protein kinases interact with CBL proteins. Binding of a CBL protein to the regulatory NAF domain of CIPK protein lead to the activation of the kinase in a calcium-dependent manner. This Oryza sativa subsp. japonica (Rice) protein is CBL-interacting protein kinase 17 (CIPK17).